Reading from the N-terminus, the 151-residue chain is Ribosome maturation factor RimP (151 aa).

It belongs to the RimP family.

It is found in the cytoplasm. Functionally, required for maturation of 30S ribosomal subunits. This is Ribosome maturation factor RimP from Vibrio parahaemolyticus serotype O3:K6 (strain RIMD 2210633).